The chain runs to 385 residues: Uroporphyrinogen decarboxylase (385 aa).

Substrate is bound by residues 53–57, D102, Y179, S234, and H363; that span reads RQAGR.

Belongs to the uroporphyrinogen decarboxylase family. In terms of assembly, homodimer.

It is found in the cytoplasm. The enzyme catalyses uroporphyrinogen III + 4 H(+) = coproporphyrinogen III + 4 CO2. It participates in porphyrin-containing compound metabolism; protoporphyrin-IX biosynthesis; coproporphyrinogen-III from 5-aminolevulinate: step 4/4. Functionally, catalyzes the decarboxylation of four acetate groups of uroporphyrinogen-III to yield coproporphyrinogen-III. The chain is Uroporphyrinogen decarboxylase from Tropheryma whipplei (strain TW08/27) (Whipple's bacillus).